A 445-amino-acid chain; its full sequence is Asparagine--tRNA ligase (445 aa).

Belongs to the class-II aminoacyl-tRNA synthetase family. Homodimer.

The protein localises to the cytoplasm. The catalysed reaction is tRNA(Asn) + L-asparagine + ATP = L-asparaginyl-tRNA(Asn) + AMP + diphosphate + H(+). This chain is Asparagine--tRNA ligase, found in Deinococcus deserti (strain DSM 17065 / CIP 109153 / LMG 22923 / VCD115).